Reading from the N-terminus, the 54-residue chain is Large ribosomal subunit protein bL33 (54 aa).

It belongs to the bacterial ribosomal protein bL33 family.

The protein is Large ribosomal subunit protein bL33 of Stenotrophomonas maltophilia (strain K279a).